The sequence spans 360 residues: Phenylalanine--tRNA ligase alpha subunit (360 aa).

E260 is a Mg(2+) binding site.

The protein belongs to the class-II aminoacyl-tRNA synthetase family. Phe-tRNA synthetase alpha subunit type 1 subfamily. Tetramer of two alpha and two beta subunits. The cofactor is Mg(2+).

The protein resides in the cytoplasm. The catalysed reaction is tRNA(Phe) + L-phenylalanine + ATP = L-phenylalanyl-tRNA(Phe) + AMP + diphosphate + H(+). The protein is Phenylalanine--tRNA ligase alpha subunit of Rhizobium etli (strain ATCC 51251 / DSM 11541 / JCM 21823 / NBRC 15573 / CFN 42).